The primary structure comprises 866 residues: E3 ubiquitin-protein ligase RNF216 (866 aa).

Disordered stretches follow at residues 46 to 117 (LVTP…NPRS), 131 to 161 (YTES…SAAL), and 211 to 240 (EFPG…HPLG). The segment covering 55–76 (EEEDLDDDVILTEDDSEDDYGE) has biased composition (acidic residues). Glycyl lysine isopeptide (Lys-Gly) (interchain with G-Cter in SUMO2) cross-links involve residues leucine 80, threonine 89, and lysine 100. Polar residues predominate over residues 137–156 (LETQNQSSEDSETELLSNLG). Glycyl lysine isopeptide (Lys-Gly) (interchain with G-Cter in SUMO2) cross-links involve residues lysine 351 and lysine 354. Serine 419 bears the Phosphoserine mark. Residues lysine 425, lysine 430, lysine 448, lysine 459, and lysine 485 each participate in a glycyl lysine isopeptide (Lys-Gly) (interchain with G-Cter in SUMO2) cross-link. Residues 475–491 (VQQEQEFYEQKIKEMAE) are a coiled coil. A TRIAD supradomain region spans residues 511-728 (QLIECRCCYG…SPGAPCQECS (218 aa)). Residues cysteine 515, cysteine 518, cysteine 537, cysteine 540, cysteine 605, and cysteine 608 each coordinate Zn(2+). Residues 515–564 (CRCCYGEFPFEELTQCADAHLFCKECLIRYAQEAVFGSGKLELSCMEGSC) form an RING-type 1 zinc finger. The segment at 583 to 648 (YKYYERKAEE…LWKEHNGLTC (66 aa)) adopts an IBR-type zinc-finger fold. A Glycyl lysine isopeptide (Lys-Gly) (interchain with G-Cter in SUMO2) cross-link involves residue lysine 619. The Zn(2+) site is built by cysteine 623, cysteine 628, cysteine 633, cysteine 636, histidine 643, and cysteine 648. Glycyl lysine isopeptide (Lys-Gly) (interchain with G-Cter in SUMO2) cross-links involve residues lysine 658 and lysine 666. Zn(2+) is bound by residues cysteine 675 and cysteine 678. An RING-type 2; atypical zinc finger spans residues 675–703 (CHKCGTGLIKSEGCNRMSCRCGAQMCYLC). The active site involves cysteine 688. Positions 693, 695, 700, 703, and 716 each coordinate Zn(2+). The residue at position 719 (serine 719) is a Phosphoserine; by MAPK1. Cysteine 724 is a Zn(2+) binding site. A coiled-coil region spans residues 737 to 763 (TEDDEKLIEEIQKEAEEEQKRKNGENT). Glycyl lysine isopeptide (Lys-Gly) (interchain with G-Cter in SUMO2) cross-links involve residues lysine 765 and lysine 773.

Interacts with UBE2L3 and to some extent with UBE2L6. Interacts with TRAF3, TLR3, TLR4, TLR5 and TLR9. Isoform 3/ZIN binds RIPK1. As to quaternary structure, (Microbial infection) Isoform 3/ZIN binds RIPK1 and HIV Vif. In terms of processing, auto-ubiquitinated. Post-translationally, phosphorylation at Ser-719 enhances acceptor ubiquitin binding and chain-type specificity towards 'Lys-63' di-ubiquitin but not di-ubiquitin with other linkage types. As to expression, ubiquitous, with the highest levels of expression in testis and peripheral blood leukocytes.

It localises to the cytoplasm. The protein resides in the cytoplasmic vesicle. It is found in the clathrin-coated vesicle. The enzyme catalyses S-ubiquitinyl-[E2 ubiquitin-conjugating enzyme]-L-cysteine + [acceptor protein]-L-lysine = [E2 ubiquitin-conjugating enzyme]-L-cysteine + N(6)-ubiquitinyl-[acceptor protein]-L-lysine.. Its pathway is protein modification; protein ubiquitination. Its activity is regulated as follows. Allosterically activated by 'Lys-63'-linked di-ubiquitin. E3 ubiquitin ligase which accepts ubiquitin from specific E2 ubiquitin-conjugating enzymes, and then transfers it to substrates promoting their ubiquitination. Plays a role in the regulation of antiviral responses by promoting the degradation of TRAF3, TLR4 and TLR9. In turn, down-regulates NF-kappa-B and IRF3 activation as well as beta interferon production. Also participates in the regulation of autophagy by ubiquitinating BECN1 leading to its degradation and autophagy inhibition. Plays a role in ARC-dependent synaptic plasticity by mediating ARC ubiquitination resulting in its rapid proteasomal degradation. Plays aso an essential role in spermatogenesis and male fertility. Mechanistically, regulates meiosis by promoting the degradation of PRKACB through the ubiquitin-mediated lysosome pathway. Modulates the gonadotropin-releasing hormone signal pathway by affecting the stability of STAU2 that is required for the microtubule-dependent transport of neuronal RNA from the cell body to the dendrite. Its function is as follows. Inhibits TNF and IL-1 mediated activation of NF-kappa-B. Promotes TNF and RIP mediated apoptosis. This chain is E3 ubiquitin-protein ligase RNF216 (RNF216), found in Homo sapiens (Human).